The chain runs to 93 residues: Small ribosomal subunit protein uS15 (93 aa).

It belongs to the universal ribosomal protein uS15 family. In terms of assembly, part of the 30S ribosomal subunit. Forms a bridge to the 50S subunit in the 70S ribosome, contacting the 23S rRNA.

Its function is as follows. One of the primary rRNA binding proteins, it binds directly to 16S rRNA where it helps nucleate assembly of the platform of the 30S subunit by binding and bridging several RNA helices of the 16S rRNA. In terms of biological role, forms an intersubunit bridge (bridge B4) with the 23S rRNA of the 50S subunit in the ribosome. In Ehrlichia chaffeensis (strain ATCC CRL-10679 / Arkansas), this protein is Small ribosomal subunit protein uS15.